Here is a 440-residue protein sequence, read N- to C-terminus: MKGLYIKTYGCQMNVYDSILMENIVKPLGFNVVSDAEQADLVILNTCHIREKAAEKLYSELGRIHSSQKNKEMTIVVAGCVAQAEGEEVFRRAPFVDIVVGPQSIPALPELIVKASRSKGHVINTDFPEVAKFDKLPDECYGNSQGSSAFLAIQEGCDKFCTFCVVPYTRGAEYSRPVNEIFREALNLVKNGAKEITLLGQNVNAYHGECEGEVWDLGKLISHIAKIEKLERIRYTTSHPRDMHESLYLVHAEESKLMPFVHLPVQSGSNKILHAMNRKHTAEEYLGIIDRLRKLKPEIEFSSDFIVGFPGETEKDFEETMKLVEKVKYAQAYSFKYSPRPGTPGAERKDQVPEEVKTERLLRLQELISKQQLEFNQSMIGKTIPVLFSDKKGKHQNQIIGKSPYMQSVCVDDPDDKYKDKIVNVRILEARQNSLLGCAA.

The MTTase N-terminal domain maps to 2–117; the sequence is KGLYIKTYGC…LPELIVKASR (116 aa). Positions 11, 47, 80, 157, 161, and 164 each coordinate [4Fe-4S] cluster. Residues 143–374 enclose the Radical SAM core domain; sequence NSQGSSAFLA…QELISKQQLE (232 aa). The TRAM domain occupies 377 to 440; it reads QSMIGKTIPV…RQNSLLGCAA (64 aa).

Belongs to the methylthiotransferase family. MiaB subfamily. In terms of assembly, monomer. [4Fe-4S] cluster serves as cofactor.

It is found in the cytoplasm. The enzyme catalyses N(6)-dimethylallyladenosine(37) in tRNA + (sulfur carrier)-SH + AH2 + 2 S-adenosyl-L-methionine = 2-methylsulfanyl-N(6)-dimethylallyladenosine(37) in tRNA + (sulfur carrier)-H + 5'-deoxyadenosine + L-methionine + A + S-adenosyl-L-homocysteine + 2 H(+). Its function is as follows. Catalyzes the methylthiolation of N6-(dimethylallyl)adenosine (i(6)A), leading to the formation of 2-methylthio-N6-(dimethylallyl)adenosine (ms(2)i(6)A) at position 37 in tRNAs that read codons beginning with uridine. This Wolbachia pipientis subsp. Culex pipiens (strain wPip) protein is tRNA-2-methylthio-N(6)-dimethylallyladenosine synthase.